The following is a 325-amino-acid chain: Aldo-keto reductase family 1 member A1 (325 aa).

A2 carries the N-acetylalanine modification. At S4 the chain carries Phosphoserine. NADP(+) is bound by residues 11 to 20, T21, and W22; that span reads GQKMPLIGLG. The residue at position 38 (S38) is a Phosphoserine. D45 serves as a coordination point for NADP(+). Y50 acts as the Proton donor in catalysis. Position 127 is an N6-acetyllysine; alternate (K127). Position 127 is an N6-succinyllysine; alternate (K127). 12 residues coordinate NADP(+): S162, N163, S211, L213, S215, S216, K263, S264, V265, T266, R269, and N273. S211 bears the Phosphoserine mark.

It belongs to the aldo/keto reductase family. Monomer.

Its subcellular location is the cytoplasm. The protein resides in the cytosol. It is found in the apical cell membrane. It carries out the reaction a primary alcohol + NADP(+) = an aldehyde + NADPH + H(+). It catalyses the reaction L-gulonate + NADP(+) = aldehydo-D-glucuronate + NADPH + H(+). The enzyme catalyses L-gulono-1,4-lactone + NADP(+) = D-glucurono-3,6-lactone + NADPH + H(+). The catalysed reaction is allyl alcohol + NADP(+) = acrolein + NADPH + H(+). It carries out the reaction glycerol + NADP(+) = D-glyceraldehyde + NADPH + H(+). It catalyses the reaction glycerol + NADP(+) = L-glyceraldehyde + NADPH + H(+). The enzyme catalyses hydroxyacetone + NADP(+) = methylglyoxal + NADPH + H(+). The catalysed reaction is 3-deoxyfructose + NADP(+) = 3-deoxyglucosone + NADPH + H(+). It carries out the reaction (R)-mevalonate + NADP(+) = (R)-mevaldate + NADPH + H(+). It catalyses the reaction pyridine 3-methanol + NADP(+) = pyridine-3-carbaldehyde + NADPH + H(+). The enzyme catalyses S-nitroso-CoA + NADPH + H(+) = sulfinamide-CoA + NADP(+). The catalysed reaction is S-nitrosoglutathione + NADPH + H(+) = S-(hydroxysulfenamide)glutathione + NADP(+). Its function is as follows. Catalyzes the NADPH-dependent reduction of a wide variety of carbonyl-containing compounds to their corresponding alcohols. Displays enzymatic activity towards endogenous metabolites such as aromatic and aliphatic aldehydes, ketones, monosaccharides and bile acids, with a preference for negatively charged substrates, such as glucuronate and succinic semialdehyde. Plays an important role in ascorbic acid biosynthesis by catalyzing the reduction of D-glucuronic acid and D-glucurono-gamma-lactone. Functions as a detoxifiying enzyme by reducing a range of toxic aldehydes. Reduces methylglyoxal and 3-deoxyglucosone, which are present at elevated levels under hyperglycemic conditions and are cytotoxic. Involved also in the detoxification of lipid-derived aldehydes like acrolein. Plays a role in the activation of procarcinogens, such as polycyclic aromatic hydrocarbon trans-dihydrodiols, and in the metabolism of various xenobiotics and drugs. Also acts as an inhibitor of protein S-nitrosylation by mediating degradation of S-nitroso-coenzyme A (S-nitroso-CoA), a cofactor required to S-nitrosylate proteins. S-nitroso-CoA reductase activity is involved in reprogramming intermediary metabolism in renal proximal tubules, notably by inhibiting protein S-nitrosylation of isoform 2 of PKM (PKM2). Also acts as a S-nitroso-glutathione reductase by catalyzing the NADPH-dependent reduction of S-nitrosoglutathione. Displays no reductase activity towards retinoids. This chain is Aldo-keto reductase family 1 member A1, found in Bos taurus (Bovine).